Consider the following 234-residue polypeptide: Protein spitz (234 aa).

The N-terminal stretch at 1 to 28 is a signal peptide; sequence MHSTMSVQHGLVALVLIGCLAHPWHVEA. Residues 29–143 lie on the Lumenal side of the membrane; it reads CSSRTVPKPR…RPRPMLEKAS (115 aa). The segment at 33-71 is disordered; sequence TVPKPRSSISSSMSGTALPPTQAPVTSSTTMRTTTTTTP. Residues 56–71 show a composition bias toward low complexity; it reads PVTSSTTMRTTTTTTP. N74 carries N-linked (GlcNAc...) asparagine glycosylation. Positions 78–122 constitute an EGF-like domain; that stretch reads PTYKCPETFDAWYCLNDAHCFAVKIADLPVYSCECAIGFMGQRCE. 3 disulfides stabilise this stretch: C82–C97, C91–C110, and C112–C121. Residues 144-164 form a helical membrane-spanning segment; it reads IASGAMCALVFMLFVCLAFYL. The Cytoplasmic segment spans residues 165 to 234; that stretch reads RFEQRAAKKA…SFAIRRSNKL (70 aa).

In terms of assembly, interacts with Star via the lumenal domain. Proteolytic processing by Rhomboid occurs in the Golgi. Cleavage takes place within the transmembrane domain close to residue 144 and the active growth factor is released. In terms of processing, N-glycosylated and O-glycosylated. Expressed throughout the embryo.

It is found in the cell membrane. It localises to the endoplasmic reticulum membrane. The protein localises to the golgi apparatus membrane. Functionally, ligand for the EGF receptor (Gurken). Involved in a number of unrelated developmental choices, for example, dorsal-ventral axis formation, glial migration, sensory organ determination, and muscle development. It is required for photoreceptor determination. The sequence is that of Protein spitz (spi) from Drosophila melanogaster (Fruit fly).